A 490-amino-acid polypeptide reads, in one-letter code: Glutamate--tRNA ligase (490 aa).

Positions 9 to 19 match the 'HIGH' region motif; that stretch reads PSPTGLQHIGG. The short motif at 251–255 is the 'KMSKS' region element; that stretch reads KLSKR. ATP is bound at residue Lys-254.

The protein belongs to the class-I aminoacyl-tRNA synthetase family. Glutamate--tRNA ligase type 1 subfamily. Monomer.

The protein localises to the cytoplasm. It carries out the reaction tRNA(Glu) + L-glutamate + ATP = L-glutamyl-tRNA(Glu) + AMP + diphosphate. Functionally, catalyzes the attachment of glutamate to tRNA(Glu) in a two-step reaction: glutamate is first activated by ATP to form Glu-AMP and then transferred to the acceptor end of tRNA(Glu). The protein is Glutamate--tRNA ligase of Borreliella burgdorferi (strain ATCC 35210 / DSM 4680 / CIP 102532 / B31) (Borrelia burgdorferi).